Consider the following 236-residue polypeptide: Ribose-5-phosphate isomerase A (236 aa).

Substrate-binding positions include 33 to 36 (TGST), 90 to 93 (DGAD), and 103 to 106 (KGGG). Glu112 (proton acceptor) is an active-site residue. Lys130 is a binding site for substrate.

The protein belongs to the ribose 5-phosphate isomerase family. As to quaternary structure, homodimer.

It carries out the reaction aldehydo-D-ribose 5-phosphate = D-ribulose 5-phosphate. The protein operates within carbohydrate degradation; pentose phosphate pathway; D-ribose 5-phosphate from D-ribulose 5-phosphate (non-oxidative stage): step 1/1. In terms of biological role, catalyzes the reversible conversion of ribose-5-phosphate to ribulose 5-phosphate. This chain is Ribose-5-phosphate isomerase A, found in Nostoc sp. (strain PCC 7120 / SAG 25.82 / UTEX 2576).